Here is a 224-residue protein sequence, read N- to C-terminus: Ribose-5-phosphate isomerase A (224 aa).

Substrate-binding positions include 32-35 (TGST), 85-88 (DGAD), and 98-101 (KGGG). Residue Glu-107 is the Proton acceptor of the active site. Residue Lys-125 coordinates substrate.

It belongs to the ribose 5-phosphate isomerase family. Homodimer.

The enzyme catalyses aldehydo-D-ribose 5-phosphate = D-ribulose 5-phosphate. It functions in the pathway carbohydrate degradation; pentose phosphate pathway; D-ribose 5-phosphate from D-ribulose 5-phosphate (non-oxidative stage): step 1/1. In terms of biological role, catalyzes the reversible conversion of ribose-5-phosphate to ribulose 5-phosphate. This is Ribose-5-phosphate isomerase A from Pseudomonas fluorescens (strain Pf0-1).